Reading from the N-terminus, the 351-residue chain is Phosphoribosylformylglycinamidine cyclo-ligase (351 aa).

Belongs to the AIR synthase family.

The protein localises to the cytoplasm. It carries out the reaction 2-formamido-N(1)-(5-O-phospho-beta-D-ribosyl)acetamidine + ATP = 5-amino-1-(5-phospho-beta-D-ribosyl)imidazole + ADP + phosphate + H(+). It functions in the pathway purine metabolism; IMP biosynthesis via de novo pathway; 5-amino-1-(5-phospho-D-ribosyl)imidazole from N(2)-formyl-N(1)-(5-phospho-D-ribosyl)glycinamide: step 2/2. This chain is Phosphoribosylformylglycinamidine cyclo-ligase, found in Xylella fastidiosa (strain 9a5c).